Here is a 503-residue protein sequence, read N- to C-terminus: Potassium voltage-gated channel subfamily V member 1 (503 aa).

Disordered regions lie at residues Met1 to Ser20 and Lys171 to Cys192. At Leu3–Arg213 the chain is on the cytoplasmic side. A compositionally biased stretch (low complexity) spans Leu10–Ser20. Basic and acidic residues predominate over residues Lys171–Phe187. The helical transmembrane segment at Ile214–Ser234 threads the bilayer. Over Ala235–Asn241 the chain is Extracellular. Residues Leu242–Leu262 form a helical membrane-spanning segment. Residues Arg263 to Asn279 lie on the Cytoplasmic side of the membrane. The chain crosses the membrane as a helical span at residues Ile280–Gly300. Over Ser301–Arg312 the chain is Extracellular. The chain crosses the membrane as a helical; Voltage-sensor span at residues Leu313–Gly334. The Cytoplasmic portion of the chain corresponds to Leu335–Glu348. Residues Val349 to Phe369 form a helical membrane-spanning segment. A Selectivity filter motif is present at residues Thr395–Asp400. A helical membrane pass occupies residues Ile410–Ile430. At Asn431–Phe503 the chain is on the cytoplasmic side.

It belongs to the potassium channel family. V (TC 1.A.1.2) subfamily. Kv8.1/KCNV1 sub-subfamily. Heteromultimer with KCNB1 and KCNB2. Interacts with KCNC4 and KCND1.

Its subcellular location is the cell membrane. Functionally, potassium channel subunit that does not form functional channels by itself. Modulates KCNB1 and KCNB2 channel activity by shifting the threshold for inactivation to more negative values and by slowing the rate of inactivation. Can down-regulate the channel activity of KCNB1, KCNB2, KCNC4 and KCND1, possibly by trapping them in intracellular membranes. This Mus musculus (Mouse) protein is Potassium voltage-gated channel subfamily V member 1 (Kcnv1).